The primary structure comprises 826 residues: Arf-GAP with ANK repeat and PH domain-containing protein cnt-1 (826 aa).

One can recognise a PH domain in the interval 275 to 373 (DVMMEGYLYK…WMRALQRTIL (99 aa)). The Arf-GAP domain occupies 447–572 (TTAFEQVRRV…RFAVAEDTRA (126 aa)). The C4-type zinc-finger motif lies at 462-485 (CADCGSPAPKWVSINLGVVLCIEC). The interval 570–604 (TRARSSATNRQEHLKHKTSIGGNSSSNGVNRSSSY) is disordered. The segment covering 588–603 (SIGGNSSSNGVNRSSS) has biased composition (low complexity). 3 ANK repeats span residues 690–719 (NGTTALHIATRNGQTAAVEFLLLNGAKINM), 723–752 (KLNTPLHLAAKEGHTLPVCQLLKRGADSNL), and 756–789 (DSKTPLDIAMECTHADIVTLFRVTIMRNDFNADF).

Interacts (via C-terminal ankyrin repeat) with rab-10 (GTP-bound form); the interaction is required for cnt-1 recruitment to endosomes. Interacts (via C-terminal ankyrin repeat) with rab-8 (GTP-bound form) and rab-35 (GTP-bound form). Post-translationally, cleaved by caspase ced-3 after Asp-382 and Asp-609. Cleavage at Asp-382 is required for subsequent cleavage at Asp-609.

The protein resides in the cytoplasm. It is found in the recycling endosome membrane. The protein localises to the basolateral cell membrane. Its subcellular location is the apical cell membrane. It localises to the cell membrane. GTPase-activating protein for the ADP ribosylation factor family. Regulates endosome recycling downstream of rab-10 and upstream of arf-6. Functionally, promotes apoptosis during embryonic development. Produced by caspase ced-3-mediated cleavage, and translocates to the plasma membrane where it prevents the activation of the prosurvival Akt-1/2 and sgk-1 signaling pathway by competing with Akt-1/2 for the binding to PtdIns(3,4,5)P3. This is Arf-GAP with ANK repeat and PH domain-containing protein cnt-1 from Caenorhabditis elegans.